The primary structure comprises 935 residues: Progesterone receptor (935 aa).

The disordered stretch occupies residues 1-50; it reads MTELKAKGPRAPHVAGSPSSPKVGSPLPCSQAAGPFPGSQTSDTLPEASA. Residues 1-164 form an AF3; mediates transcriptional activation region; it reads MTELKAKGPR…PATQRVLSPL (164 aa). The modulating, Pro-Rich stretch occupies residues 1–568; it reads MTELKAKGPR…YSFESLPQKI (568 aa). A Phosphoserine modification is found at S20. The LXXL motif 1 motif lies at 55–59; sequence LDGLL. A disordered region spans residues 62 to 159; sequence RICQGQDPTD…DPPAAPATQR (98 aa). S81 is modified (phosphoserine). An LXXL motif 2 motif is present at residues 115–119; the sequence is LDTLW. Residues S130 and S162 each carry the phosphoserine modification. Positions 165–305 are mediates transcriptional transrepression; it reads MSRSGGKAGD…LATTVTDFIH (141 aa). The short motif at 183–187 is the Nuclear localization signal element; the sequence is KVLPR. The segment at 185 to 252 is disordered; the sequence is LPRGLSPSRQ…ALGGAAAGGG (68 aa). S190 is modified (phosphoserine). Over residues 191-203 the composition is skewed to polar residues; the sequence is PSRQLLLPTSGSP. S213 is modified (phosphoserine). The span at 220–231 shows a compositional bias: acidic residues; it reads EVEEEDGSESED. Residues 232–246 show a composition bias toward low complexity; that stretch reads SAGPLLKGKPRALGG. Residue S294 is modified to Phosphoserine; by MAPK1. A disordered region spans residues 331-365; that stretch reads GGAGAASAFAPPRSSPSASSTPVPGGDFPDCAYAP. Residues 335–356 are compositionally biased toward low complexity; it reads AASAFAPPRSSPSASSTPVPGG. Position 345 is a phosphoserine; by MAPK (S345). K388 is covalently cross-linked (Glycyl lysine isopeptide (Lys-Gly) (interchain with G-Cter in SUMO); alternate). Residue K388 forms a Glycyl lysine isopeptide (Lys-Gly) (interchain with G-Cter in ubiquitin); alternate linkage. Position 400 is a phosphoserine; by CDK2 (S400). The segment at 415–452 is disordered; the sequence is PDFPLGPPPSLPPRAPPPRPGEAAVTAAPASASVSSAS. A compositionally biased stretch (pro residues) spans 418–434; the sequence is PLGPPPSLPPRAPPPRP. Low complexity predominate over residues 435–452; it reads GEAAVTAAPASASVSSAS. The interval 456 to 548 is AF1; mediates transcriptional activation; the sequence is STLECILYKA…VYPPYLNYLR (93 aa). K533 participates in a covalent cross-link: Glycyl lysine isopeptide (Lys-Gly) (interchain with G-Cter in SUMO). 2 consecutive NR C4-type zinc fingers follow at residues 569–589 and 605–629; these read CLICGDEASGCHYGVLTCGSC and CAGRNDCIVDKIRRKNCPACRLRKC. Positions 569 to 641 form a DNA-binding region, nuclear receptor; the sequence is CLICGDEASG…AGMVLGGRKF (73 aa). S678 is subject to Phosphoserine. Residues 681–915 form the NR LBD domain; the sequence is QDIQLIPPLI…EFPEMMSEVI (235 aa). Positions 689–935 are AF2; mediates transcriptional activation; the sequence is LINLLLSIEP…MVKPLLFHKK (247 aa).

This sequence belongs to the nuclear hormone receptor family. Interacts with SMARD1 and UNC45A. Interacts with CUEDC2; the interaction promotes ubiquitination, decreases sumoylation, and represses transcriptional activity. Interacts with PIAS3; the interaction promotes sumoylation of PR in a hormone-dependent manner, inhibits DNA-binding, and alters nuclear export. Interacts with SP1; the interaction requires ligand-induced phosphorylation on Ser-344 by ERK1/2-MAPK. Interacts with PRMT2. Interacts with NCOA2 and NCOA1. Interacts with KLF9. Interacts with GTF2B. Phosphorylated on multiple serine sites. Several of these sites are hormone-dependent. Phosphorylation on Ser-294 is highly hormone-dependent and modulates ubiquitination and sumoylation on Lys-388. Phosphorylation on Ser-345 requires induction by hormone. Basal phosphorylation on Ser-81, Ser-162, Ser-190 and Ser-400 is increased in response to progesterone and can be phosphorylated in vitro by the CDK2-A1 complex. Increased levels of phosphorylation on Ser-400 also in the presence of EGF, heregulin, IGF, PMA and FBS. Phosphorylation at this site by CDK2 is ligand-independent, and increases nuclear translocation and transcriptional activity. Phosphorylation at Ser-162 and Ser-294, but not at Ser-190, is impaired during the G(2)/M phase of the cell cycle. Phosphorylation on Ser-345 by ERK1/2 MAPK is required for interaction with SP1. Post-translationally, sumoylation is hormone-dependent and represses transcriptional activity. Sumoylation on all three sites is enhanced by PIAS3. Desumoylated by SENP1. Sumoylation on Lys-388, the main site of sumoylation, is repressed by ubiquitination on the same site, and modulated by phosphorylation at Ser-294. In terms of processing, ubiquitination is hormone-dependent and represses sumoylation on the same site. Promoted by MAPK-mediated phosphorylation on Ser-294. Palmitoylated by ZDHHC7 and ZDHHC21. Palmitoylation is required for plasma membrane targeting and for rapid intracellular signaling via ERK and AKT kinases and cAMP generation.

It localises to the nucleus. The protein resides in the cytoplasm. In terms of biological role, the steroid hormones and their receptors are involved in the regulation of eukaryotic gene expression and affect cellular proliferation and differentiation in target tissues. Transcriptional activator of several progesteron-dependent promoters in a variety of cell types. Involved in activation of SRC-dependent MAPK signaling on hormone stimulation. The chain is Progesterone receptor (PGR) from Pithecia irrorata (Gray monk saki).